The following is a 426-amino-acid chain: Glutamate-1-semialdehyde 2,1-aminomutase (426 aa).

Lys-265 is modified (N6-(pyridoxal phosphate)lysine).

The protein belongs to the class-III pyridoxal-phosphate-dependent aminotransferase family. HemL subfamily. In terms of assembly, homodimer. Requires pyridoxal 5'-phosphate as cofactor.

It is found in the cytoplasm. The enzyme catalyses (S)-4-amino-5-oxopentanoate = 5-aminolevulinate. It functions in the pathway porphyrin-containing compound metabolism; protoporphyrin-IX biosynthesis; 5-aminolevulinate from L-glutamyl-tRNA(Glu): step 2/2. The chain is Glutamate-1-semialdehyde 2,1-aminomutase from Escherichia coli (strain SMS-3-5 / SECEC).